The chain runs to 69 residues: Large ribosomal subunit protein bL32c (69 aa).

This sequence belongs to the bacterial ribosomal protein bL32 family.

Its subcellular location is the plastid. The protein localises to the chloroplast. The polypeptide is Large ribosomal subunit protein bL32c (rpl32) (Marchantia polymorpha (Common liverwort)).